A 261-amino-acid chain; its full sequence is Indole-3-glycerol phosphate synthase (261 aa).

It belongs to the TrpC family.

It carries out the reaction 1-(2-carboxyphenylamino)-1-deoxy-D-ribulose 5-phosphate + H(+) = (1S,2R)-1-C-(indol-3-yl)glycerol 3-phosphate + CO2 + H2O. Its pathway is amino-acid biosynthesis; L-tryptophan biosynthesis; L-tryptophan from chorismate: step 4/5. The protein is Indole-3-glycerol phosphate synthase of Burkholderia cenocepacia (strain HI2424).